The following is a 157-amino-acid chain: Phosphopantetheine adenylyltransferase (157 aa).

It belongs to the eukaryotic CoaD family.

The protein resides in the cytoplasm. It catalyses the reaction (R)-4'-phosphopantetheine + ATP + H(+) = 3'-dephospho-CoA + diphosphate. It participates in cofactor biosynthesis; coenzyme A biosynthesis. Its function is as follows. Reversibly transfers an adenylyl group from ATP to 4'-phosphopantetheine, yielding dephospho-CoA (dPCoA) and pyrophosphate. This Methanopyrus kandleri (strain AV19 / DSM 6324 / JCM 9639 / NBRC 100938) protein is Phosphopantetheine adenylyltransferase.